We begin with the raw amino-acid sequence, 754 residues long: Leucine-rich repeat-containing protein 36 (754 aa).

LRR repeat units follow at residues asparagine 51 to cysteine 72 and serine 73 to glutamine 94. Residues asparagine 107 to histidine 146 form the LRRCT domain. The span at arginine 241–histidine 255 shows a compositional bias: basic and acidic residues. Residues arginine 241–threonine 270 form a disordered region. Residues asparagine 600–serine 680 are a coiled coil. The disordered stretch occupies residues tyrosine 702 to alanine 734. Residues phenylalanine 722 to proline 732 show a composition bias toward polar residues.

The polypeptide is Leucine-rich repeat-containing protein 36 (LRRC36) (Homo sapiens (Human)).